A 284-amino-acid polypeptide reads, in one-letter code: Zinc finger protein ZAT3 (284 aa).

Positions Met-1–Phe-12 are enriched in basic and acidic residues. The segment at Met-1–Thr-76 is disordered. Residues Pro-18–Asp-37 are compositionally biased toward polar residues. Positions Thr-47–Pro-62 are enriched in low complexity. C2H2-type zinc fingers lie at residues Arg-77–His-99, Phe-162–His-184, and His-222–His-244.

In terms of assembly, interacts (via the EAR motif) with TPL. As to expression, expressed exclusively in pollen.

It localises to the nucleus. Its function is as follows. Mediates the regulation of male germ cell division by DUO1. The polypeptide is Zinc finger protein ZAT3 (Arabidopsis thaliana (Mouse-ear cress)).